Reading from the N-terminus, the 166-residue chain is NADH-quinone oxidoreductase subunit A (166 aa).

3 consecutive transmembrane segments (helical) span residues 16–36 (FAVF…GAYF), 68–88 (FYLV…LYAW), and 98–118 (IGFI…FYLV). Residues 141–166 (RYASSHPQDISQELSVAGSQQANESR) are disordered.

Belongs to the complex I subunit 3 family. In terms of assembly, NDH-1 is composed of 13 different subunits. Subunits NuoA, H, J, K, L, M, N constitute the membrane sector of the complex.

Its subcellular location is the cell inner membrane. It carries out the reaction a quinone + NADH + 5 H(+)(in) = a quinol + NAD(+) + 4 H(+)(out). In terms of biological role, NDH-1 shuttles electrons from NADH, via FMN and iron-sulfur (Fe-S) centers, to quinones in the respiratory chain. The immediate electron acceptor for the enzyme in this species is believed to be ubiquinone. Couples the redox reaction to proton translocation (for every two electrons transferred, four hydrogen ions are translocated across the cytoplasmic membrane), and thus conserves the redox energy in a proton gradient. In Yersinia pseudotuberculosis serotype O:1b (strain IP 31758), this protein is NADH-quinone oxidoreductase subunit A.